We begin with the raw amino-acid sequence, 281 residues long: Phosphoglycerate mutase-like protein AT74H (281 aa).

His-17 acts as the Tele-phosphohistidine intermediate in catalysis. Catalysis depends on Glu-109, which acts as the Proton donor/acceptor.

Belongs to the phosphoglycerate mutase family.

Functionally, may play a role in carbohydrates metabolism. The sequence is that of Phosphoglycerate mutase-like protein AT74H from Arabidopsis thaliana (Mouse-ear cress).